The following is a 418-amino-acid chain: Deubiquitinase and deneddylase Dub1 (418 aa).

Residues 1 to 10 show a composition bias toward polar residues; that stretch reads MLSPTNSISK. A disordered region spans residues 1-23; it reads MLSPTNSISKTVPAPPQDSSKPV. Residues 40–60 form a helical membrane-spanning segment; sequence TALAVLLVVVTLGLILLFYSF. The disordered stretch occupies residues 75–145; the sequence is STKEHPTISI…LPPKAPKPVK (71 aa). Positions 86–141 are enriched in pro residues; the sequence is EPLPSPPLAVPRPSTPPPPVISRPSTPPAPTPAISPPSTPSAPKPSTPPPLPPKAP. Residues His288, Asp305, and Cys358 contribute to the active site.

It belongs to the peptidase C48 family.

Its subcellular location is the secreted. The protein resides in the host cell. The protein localises to the membrane. Its function is as follows. Effector proteins function to alter host cell physiology and promote bacterial survival in host tissues. This protease possesses deubiquitinating and deneddylating activities. This Chlamydia trachomatis serovar A (strain ATCC VR-571B / DSM 19440 / HAR-13) protein is Deubiquitinase and deneddylase Dub1 (cdu1).